A 472-amino-acid chain; its full sequence is MKYTSTRGGLIGVDFEGVLFSGFAPDGGLFMPEDIPKVDKRTLQTWSSYSYIQLVKEICSLFISPESIPRADLEGLIDRAFIRFRHRDIVPITRLKSGLNVMEMWHGVTHAFKDLAMSCVGELLDYFLKRKNKHVTILVATSGDTGSSAIESVRRRENMDIIVLLPHGRCTKIQELQMTTVIEDNVHVFSVDGTSDELDYPIKRLFADSDFVKKHNIMSTNSVNWARILVQIAHFFYGYMQCAPLTELTPVEIIVPTGGAGNITAGCIAQAMGLPIHLVAVVNRNDIVHRTVQYGDFSLGDTKATLASAMDIQEPYNMERILWLLAGSEKSHIKEMMKEFQEKKRVKLPEQLHKKIAGAMTSCVVTDENILGTIGRCWEENHYLLCPHSAVAVYYHYQQMDSNDKSPRCCLAPASAAKFQDVIIKANLTPDIPQEIKDLEKKKTRSHHLTKEDDWEKVLRQTIESISQRKVQ.

At lysine 113 the chain carries N6-(pyridoxal phosphate)lysine.

This sequence belongs to the threonine synthase family. Pyridoxal 5'-phosphate serves as cofactor.

Acts as a catabolic phospho-lyase on both gamma- and beta-phosphorylated substrates. Degrades O-phospho-threonine (PThr) to alpha-ketobutyrate, ammonia and phosphate. The chain is Threonine synthase-like 2 (thnsl2) from Xenopus laevis (African clawed frog).